Reading from the N-terminus, the 415-residue chain is rRNA methyltransferase 3, mitochondrial (415 aa).

A mitochondrion-targeting transit peptide spans methionine 1 to arginine 47. Positions proline 41–valine 73 are disordered. Basic and acidic residues predominate over residues glutamate 44–arginine 56. A compositionally biased stretch (polar residues) spans glutamine 59–valine 73. 3 residues coordinate S-adenosyl-L-methionine: glycine 357, isoleucine 381, and leucine 390.

It belongs to the class IV-like SAM-binding methyltransferase superfamily. RNA methyltransferase TrmH family.

The protein localises to the mitochondrion. The enzyme catalyses a uridine in rRNA + S-adenosyl-L-methionine = a 2'-O-methyluridine in rRNA + S-adenosyl-L-homocysteine + H(+). Its function is as follows. S-adenosyl-L-methionine-dependent 2'-O-ribose methyltransferase that catalyzes the formation of 2'-O-methylguanosine at position 1370 (Gm1370) in the mitochondrial large subunit ribosomal RNA (mtLSU rRNA), a conserved modification in the peptidyl transferase domain of the mtLSU rRNA. Also required for formation of 2'-O-methyluridine at position 1369 (Um1369) mediated by MRM2. The polypeptide is rRNA methyltransferase 3, mitochondrial (Xenopus tropicalis (Western clawed frog)).